Consider the following 112-residue polypeptide: MTRCALLLLMVLMLGRVLVVPVTPIPTFQLRPQNSPQTTPRPAASESPSAAPTWPWAAQSHCSPTRHPGSRIVLSLDVPIGLLQILLEQARARAAREQATTNARILARVGHC.

The N-terminal stretch at Met-1–Val-22 is a signal peptide. Positions Thr-23–Ser-70 are excised as a propeptide. Residues Thr-27–Arg-66 are disordered. Over residues Thr-38–Ala-58 the composition is skewed to low complexity.

Belongs to the sauvagine/corticotropin-releasing factor/urotensin I family. As to quaternary structure, binds with high affinity to CRF receptors 2-alpha and 2-beta. Post-translationally, glycosylated.

The protein localises to the secreted. In terms of biological role, suppresses food intake, delays gastric emptying and decreases heat-induced edema. Might represent an endogenous ligand for maintaining homeostasis after stress. The sequence is that of Urocortin-2 (UCN2) from Homo sapiens (Human).